The primary structure comprises 1032 residues: Structural polyprotein (1032 aa).

Asp23 serves as a coordination point for a divalent metal cation. The Peptidase S50 domain maps to 501–723; sequence ADSPLGEEHW…QTLPHWTAGS (223 aa). Ser627 acts as the Nucleophile in catalysis. Lys670 is an active-site residue. The tract at residues 986–1014 is disordered; sequence LVNQPATAPRVPPRRIVSAQTAQTDPPGR. Positions 1021-1030 are interaction with VP1 protein; sequence LRRVRGEDND.

In terms of assembly, homotrimer. A central divalent metal stabilizes the VP2 trimer. Homodimer. Interacts (via C-terminus) with VP1 in the cytoplasm. Capsid VP3 interacts with VP2. Specific enzymatic cleavages yield mature proteins. The capsid assembly seems to be regulated by polyprotein processing. The protease VP4 cleaves itself off the polyprotein, thus releasing pre-VP2 and VP3 within the infected cell. During capsid assembly, the C-terminus of pre-VP2 is further processed by VP4, giving rise to VP2, the external capsid protein and three small peptides that all stay closely associated with the capsid.

Its subcellular location is the virion. The protein resides in the host cytoplasm. Its function is as follows. Capsid protein VP2 self assembles to form an icosahedral capsid with a T=13 symmetry, about 70 nm in diameter, and consisting of 260 VP2 trimers. The capsid encapsulates the genomic dsRNA. VP2 is also involved in attachment and entry into the host cell. In terms of biological role, the precursor of VP2 plays an important role in capsid assembly. First, pre-VP2 and VP2 oligomers assemble to form a procapsid. Then, the pre-VP2 intermediates may be processed into VP2 proteins by proteolytic cleavage mediated by VP4 to obtain the mature virion. The final capsid is composed of pentamers and hexamers but VP2 has a natural tendency to assemble into all-pentameric structures. Therefore pre-VP2 may be required to allow formation of the hexameric structures. Protease VP4 is a serine protease that cleaves the polyprotein into its final products. Pre-VP2 is first partially cleaved, and may be completely processed by VP4 upon capsid maturation. Functionally, capsid protein VP3 plays a key role in virion assembly by providing a scaffold for the capsid made of VP2. May self-assemble to form a T=4-like icosahedral inner-capsid composed of at least 180 trimers. Plays a role in genomic RNA packaging by recruiting VP1 into the capsid and interacting with the dsRNA genome segments to form a ribonucleoprotein complex. Additionally, the interaction of the VP3 C-terminal tail with VP1 removes the inherent structural blockade of the polymerase active site. Thus, VP3 can also function as a transcriptional activator. Its function is as follows. Structural peptide 1 is a small peptide derived from pre-VP2 C-terminus. It destabilizes and perforates cell membranes, suggesting a role during entry. In terms of biological role, structural peptide 2 is a small peptide derived from pre-VP2 C-terminus. It is not essential for the virus viability, but viral growth is affected when missing. Structural peptide 3 is a small peptide derived from pre-VP2 C-terminus. It is not essential for the virus viability, but viral growth is affected when missing. The chain is Structural polyprotein from Drosophila melanogaster (Fruit fly).